Reading from the N-terminus, the 480-residue chain is Cysteine--tRNA ligase (480 aa).

Position 29 (Cys29) interacts with Zn(2+). A 'HIGH' region motif is present at residues 31-41 (PTVYADPHLGH). Zn(2+) contacts are provided by Cys220, His245, and Glu249. Residues 276–280 (KMAKS) carry the 'KMSKS' region motif. Lys279 is a binding site for ATP.

Belongs to the class-I aminoacyl-tRNA synthetase family. As to quaternary structure, monomer. The cofactor is Zn(2+).

It localises to the cytoplasm. It catalyses the reaction tRNA(Cys) + L-cysteine + ATP = L-cysteinyl-tRNA(Cys) + AMP + diphosphate. The chain is Cysteine--tRNA ligase from Thermus thermophilus (strain ATCC 27634 / DSM 579 / HB8).